Here is a 383-residue protein sequence, read N- to C-terminus: MFALTFLNPNPRLPSPLFLAKSTPESALSRRSRAFSSSNSYPWRPNLRFNGFKLKSATVPENVEGGDLESGSLVKGLKLGGMFGVWYLLNIYYNIFNKQVLRVYPYPATVTAFQLGCGTLMIAIMWLLKLHPRPKFSPSQFTVIVQLAVAHTLGNLLTNVSLGRVNVSFTHTIKAMEPFFTVLLSVLLLGEWPSLWIVCSLLPIVAGVSLASFTEASFNWIGFCSAMASNVTNQSRNVLSKKFMVGKDALDNINLFSIITIISFILLVPLAILIDGFKVTPSHLQVATSQGLSVKEFCIMSLLAGVCLHSYQQVSYMILEMVSPVTHSVGNCVKRVVVITSSILFFKTPVSPLNSIGTATALAGVYLYSRAKRVQVKPNPKMS.

A chloroplast-targeting transit peptide spans Met1–Lys55. Helical transmembrane passes span Gly76–Phe96, Ala108–Leu128, Val143–Gly163, Phe179–Cys199, Leu210–Thr232, Ile253–Leu273, Ile299–Leu319, and Val350–Ser369. The 120-residue stretch at Tyr93–Ser212 folds into the EamA domain.

The protein belongs to the TPT transporter family. PPT (TC 2.A.7.9) subfamily. As to expression, widely expressed in leaves throughout development. In flowers, expressed in sepals and pistils.

The protein resides in the plastid. It localises to the chloroplast membrane. Phosphoenolpyruvate/phosphate translocator that transports phosphoenolpyruvate (PEP), 2-phosphoglycerate and 3-phosphoglycerate. In Arabidopsis thaliana (Mouse-ear cress), this protein is Phosphoenolpyruvate/phosphate translocator 2, chloroplastic (PPT2).